A 269-amino-acid chain; its full sequence is 4-hydroxy-tetrahydrodipicolinate reductase (269 aa).

NAD(+) contacts are provided by residues 13-18 and D39; that span reads GASGRM. NADP(+) is bound at residue R40. NAD(+) contacts are provided by residues 101 to 103 and 125 to 128; these read GTT and APNM. The Proton donor/acceptor role is filled by H158. Residue H159 coordinates (S)-2,3,4,5-tetrahydrodipicolinate. K162 (proton donor) is an active-site residue. 168–169 serves as a coordination point for (S)-2,3,4,5-tetrahydrodipicolinate; it reads GT.

It belongs to the DapB family.

The protein localises to the cytoplasm. It catalyses the reaction (S)-2,3,4,5-tetrahydrodipicolinate + NAD(+) + H2O = (2S,4S)-4-hydroxy-2,3,4,5-tetrahydrodipicolinate + NADH + H(+). It carries out the reaction (S)-2,3,4,5-tetrahydrodipicolinate + NADP(+) + H2O = (2S,4S)-4-hydroxy-2,3,4,5-tetrahydrodipicolinate + NADPH + H(+). Its pathway is amino-acid biosynthesis; L-lysine biosynthesis via DAP pathway; (S)-tetrahydrodipicolinate from L-aspartate: step 4/4. Catalyzes the conversion of 4-hydroxy-tetrahydrodipicolinate (HTPA) to tetrahydrodipicolinate. In Bordetella bronchiseptica (strain ATCC BAA-588 / NCTC 13252 / RB50) (Alcaligenes bronchisepticus), this protein is 4-hydroxy-tetrahydrodipicolinate reductase.